We begin with the raw amino-acid sequence, 136 residues long: UPF0310 protein HH_1062 (136 aa).

Belongs to the UPF0310 family.

This chain is UPF0310 protein HH_1062, found in Helicobacter hepaticus (strain ATCC 51449 / 3B1).